We begin with the raw amino-acid sequence, 118 residues long: Large ribosomal subunit protein bL19 (118 aa).

The protein belongs to the bacterial ribosomal protein bL19 family.

This protein is located at the 30S-50S ribosomal subunit interface and may play a role in the structure and function of the aminoacyl-tRNA binding site. This chain is Large ribosomal subunit protein bL19, found in Geotalea uraniireducens (strain Rf4) (Geobacter uraniireducens).